The following is a 445-amino-acid chain: UPF0210 protein LACR_1020 (445 aa).

The protein belongs to the UPF0210 family. Homodimer.

The chain is UPF0210 protein LACR_1020 from Lactococcus lactis subsp. cremoris (strain SK11).